We begin with the raw amino-acid sequence, 488 residues long: MKYKDLRDFIDLLEKRGELKRITQEIDPYLEMTEIADRTLRAKGPALLFENPKGYDIPVLANLFGTPKRVAMGMGQEDVSELREVGKLLAFLKEPEPPKGIKEALGQIPVYKQVLNMPAKEVKKAPCQEVILQGDEVDLTKLPIQHCWPGDAAPLITWGLTVTKGPYKKRQNLGIYRQQLLGKNKIIMRWLSHRGGALDFQEWCKENPGQPYPVSVALGADPATILGAVTPVPDTLSEYAFAGLLRGSKTEVVKSISNDLQVPASAEIVLEGYIMPGEMAPEGPYGDHTGYYNEVDDFPVMTVTHMTHRKNPIYHSTFTGRPPDEPAILGVALNEVFVPILQKQFPEIVDFYLPPEGCSYRMAIVTMKKQYPGHAKRVMMGVWSYLRQFMYTKFVIVCDDDINARDWEDVIWAITTRMDPARDTTLIENTPIDYLDFASPVSGLGSKMGMDATNKWPGETNREWGEPIEMDKATKDRVDDIWQSLNIL.

Asn-172 contributes to the Mn(2+) binding site. Prenylated FMN contacts are provided by residues 175-177 (IYR), 189-191 (RWL), and 194-195 (RG). Position 238 (Glu-238) interacts with Mn(2+). Asp-287 functions as the Proton donor in the catalytic mechanism.

Belongs to the UbiD family. As to quaternary structure, homohexamer. Prenylated FMN serves as cofactor. Mn(2+) is required as a cofactor.

The protein resides in the cell membrane. The enzyme catalyses a 4-hydroxy-3-(all-trans-polyprenyl)benzoate + H(+) = a 2-(all-trans-polyprenyl)phenol + CO2. It participates in cofactor biosynthesis; ubiquinone biosynthesis. Catalyzes the decarboxylation of 3-octaprenyl-4-hydroxy benzoate to 2-octaprenylphenol, an intermediate step in ubiquinone biosynthesis. In Pseudoalteromonas translucida (strain TAC 125), this protein is 3-octaprenyl-4-hydroxybenzoate carboxy-lyase.